The sequence spans 106 residues: MQLKHLKKGDFVKVISGREKGKTGKVLTVISEKNRVVIEKMNMVKRHQKANAMGKGGIVEKEGPIHASNVMMMCGKCNKETRVGIKKLEDGKKVRICKKCNDILDI.

Belongs to the universal ribosomal protein uL24 family. Part of the 50S ribosomal subunit.

Its function is as follows. One of two assembly initiator proteins, it binds directly to the 5'-end of the 23S rRNA, where it nucleates assembly of the 50S subunit. One of the proteins that surrounds the polypeptide exit tunnel on the outside of the subunit. The protein is Large ribosomal subunit protein uL24 of Syntrophus aciditrophicus (strain SB).